The sequence spans 180 residues: ATP synthase subunit delta (180 aa).

It belongs to the ATPase delta chain family. F-type ATPases have 2 components, F(1) - the catalytic core - and F(0) - the membrane proton channel. F(1) has five subunits: alpha(3), beta(3), gamma(1), delta(1), epsilon(1). F(0) has three main subunits: a(1), b(2) and c(10-14). The alpha and beta chains form an alternating ring which encloses part of the gamma chain. F(1) is attached to F(0) by a central stalk formed by the gamma and epsilon chains, while a peripheral stalk is formed by the delta and b chains.

Its subcellular location is the cell membrane. In terms of biological role, f(1)F(0) ATP synthase produces ATP from ADP in the presence of a proton or sodium gradient. F-type ATPases consist of two structural domains, F(1) containing the extramembraneous catalytic core and F(0) containing the membrane proton channel, linked together by a central stalk and a peripheral stalk. During catalysis, ATP synthesis in the catalytic domain of F(1) is coupled via a rotary mechanism of the central stalk subunits to proton translocation. This protein is part of the stalk that links CF(0) to CF(1). It either transmits conformational changes from CF(0) to CF(1) or is implicated in proton conduction. The chain is ATP synthase subunit delta from Enterococcus hirae (strain ATCC 9790 / DSM 20160 / JCM 8729 / LMG 6399 / NBRC 3181 / NCIMB 6459 / NCDO 1258 / NCTC 12367 / WDCM 00089 / R).